Reading from the N-terminus, the 904-residue chain is Protein abrupt (904 aa).

Residues 1-15 (MTESTQLQTAENNNA) are compositionally biased toward polar residues. 2 disordered regions span residues 1–30 (MTESTQLQTAENNNAGVVKMEPPPPATSSV) and 53–72 (GSALSPATPPPSLNLSHQQQ). The 66-residue stretch at 103 to 168 (VDVTLACDER…MYNGEVNVSH (66 aa)) folds into the BTB domain. Low complexity predominate over residues 204 to 238 (SHNSSNNNNNNSSSNNSLSNNNNNNNNNAESSNHN). Disordered stretches follow at residues 204–287 (SHNS…LNSP), 349–390 (ASSA…PPPQ), 411–438 (LLDREFPVAGQHPLTRNRSGRDTSKDRE), and 451–501 (ALEN…NQRS). A compositionally biased stretch (polar residues) spans 239 to 253 (KISSYLSPNQTSAAC). Residues 254–286 (NNSSNSNSNNHSSSHNNSSSNNISGSLNSSLNS) show a composition bias toward low complexity. A compositionally biased stretch (basic and acidic residues) spans 429–438 (SGRDTSKDRE). The span at 452-461 (LENSNGQQAN) shows a compositional bias: polar residues. Position 474 is a phosphoserine (serine 474). The span at 481–500 (PSDRGDGQHDGTLDGIDNQR) shows a compositional bias: basic and acidic residues. 2 C2H2-type zinc fingers span residues 544-567 (RPCPKCGKIYRSAHTLRTHLEDKH) and 573-596 (YRCVLCGTVAKSRNSLHSHMSRQH). Disordered stretches follow at residues 633–696 (ELRA…GGSS) and 832–904 (AAGN…VHNT). A compositionally biased stretch (gly residues) spans 642–655 (GGSGSSGGGGGGGS). Residues 671 to 682 (DDAEDSDDDPED) are compositionally biased toward acidic residues. Serine 837, serine 846, and serine 868 each carry phosphoserine. Over residues 851-868 (MGHDEMAENDGDMRREGS) the composition is skewed to basic and acidic residues. A compositionally biased stretch (polar residues) spans 876-886 (DNNQSGSNHEV). Phosphoserine occurs at positions 889 and 896.

As to expression, expressed in CNS midline cells during embryonic stages 9-13. Expression also seen in cells of the stomagastric nervous system. Segmentally repeated stripes of ectodermal expression appear at stage 11 that become uniform by stage 12 and throughout embryogenesis. Expressed at variable levels in somatic muscles from stage 16 and in all imaginal disks during larval development. Expression is seen in da neurons that grow in two-dimensional dendrites underneath the epidermis during late embryonic, larval, and pupal stages.

Its subcellular location is the nucleus. In terms of biological role, expression is vital for development; may be involved in transcriptional regulation. In embryos, muscle specific expression is required for segmental nerve b (SNb) motoneuron target recognition within ventral longitudinal muscles. Has a role in establishing and maintaining embryonic muscle attachments, adult sensory cell formation (macrochaetae) and morphogenesis of adult appendages (legs, antenna aristae and male external genitalia). Has a role in the morphogenesis of the class I dendritic neurons: selective expression of ab in class I da neurons plays a pivotal role in forming dendritic arbors, which are characteristic of the class I cells. The development of more complex arbors of class II-IV neurons depends on the absence of ab. In Drosophila melanogaster (Fruit fly), this protein is Protein abrupt (ab).